The primary structure comprises 323 residues: Thymidylate synthase (323 aa).

DUMP contacts are provided by residues arginine 21 and 172–173 (RR). Cysteine 192 functions as the Nucleophile in the catalytic mechanism. DUMP contacts are provided by residues 214-217 (RSND), asparagine 225, and 255-257 (HVY). Residue aspartate 217 participates in (6R)-5,10-methylene-5,6,7,8-tetrahydrofolate binding. (6R)-5,10-methylene-5,6,7,8-tetrahydrofolate is bound at residue alanine 322.

The protein belongs to the thymidylate synthase family. Bacterial-type ThyA subfamily. In terms of assembly, homodimer.

It localises to the cytoplasm. It catalyses the reaction dUMP + (6R)-5,10-methylene-5,6,7,8-tetrahydrofolate = 7,8-dihydrofolate + dTMP. Its pathway is pyrimidine metabolism; dTTP biosynthesis. Its function is as follows. Catalyzes the reductive methylation of 2'-deoxyuridine-5'-monophosphate (dUMP) to 2'-deoxythymidine-5'-monophosphate (dTMP) while utilizing 5,10-methylenetetrahydrofolate (mTHF) as the methyl donor and reductant in the reaction, yielding dihydrofolate (DHF) as a by-product. This enzymatic reaction provides an intracellular de novo source of dTMP, an essential precursor for DNA biosynthesis. In Pseudomonas putida (strain ATCC 47054 / DSM 6125 / CFBP 8728 / NCIMB 11950 / KT2440), this protein is Thymidylate synthase.